We begin with the raw amino-acid sequence, 152 residues long: Protein PLANT CADMIUM RESISTANCE 2 (152 aa).

Residues 57–79 traverse the membrane as a helical segment; sequence TAGALYALIAVVTGCACIYSCFY.

The protein belongs to the cornifelin family. In terms of assembly, homooligomer. As to expression, expressed in roots, leaves, shoots, stems, flowers and siliques. In leaves, restricted mainly to the vascular tissue. Expressed in all cells in the root tip, in the vascular tissue and the epidermis in the elongation zone, and only in the epidermal cells in the root hair zone.

The protein resides in the cell membrane. Its function is as follows. Zinc transporter acting in both zinc extrusion and long-distance zinc transport. Involved in the loading of zinc into the xyleme and in the detoxification of excess zinc at the epidermal cells. Acts independently from the zinc transporters HMA2 and HMA4. May be also involved in cadmium resistance. The polypeptide is Protein PLANT CADMIUM RESISTANCE 2 (PCR2) (Arabidopsis thaliana (Mouse-ear cress)).